We begin with the raw amino-acid sequence, 185 residues long: Transcriptional repressor NrdR (185 aa).

The interval 1 to 24 is disordered; it reads MRCPFCGGPDTQVKDSRPSEDSSA. A zinc finger lies at 3–34; it reads CPFCGGPDTQVKDSRPSEDSSAIRRRRVCPDC. Over residues 12–24 the composition is skewed to basic and acidic residues; it reads QVKDSRPSEDSSA. An ATP-cone domain is found at 49-139; that stretch reads LVVLKRSGKR…VYKNFREAQD (91 aa). Residues 148–185 are disordered; it reads GERLDGEGDLPEQGDAVPAPPDEAVAAPRRGRPARKRA. Basic residues predominate over residues 176–185; that stretch reads RRGRPARKRA.

It belongs to the NrdR family. Zn(2+) is required as a cofactor.

In terms of biological role, negatively regulates transcription of bacterial ribonucleotide reductase nrd genes and operons by binding to NrdR-boxes. This chain is Transcriptional repressor NrdR, found in Methylorubrum extorquens (strain CM4 / NCIMB 13688) (Methylobacterium extorquens).